The following is a 94-amino-acid chain: uncharacterized protein (94 aa).

The HTH cro/C1-type domain maps to 13 to 67; sequence IQESLDELNVSLREFARAMEIAPSTASRLLTGKAALTPEMAIKLSVVIGSSPQMW. A DNA-binding region (H-T-H motif) is located at residues 24–43; it reads LREFARAMEIAPSTASRLLT.

Belongs to the VapA/VapI family.

This is an uncharacterized protein from Escherichia coli (strain K12).